We begin with the raw amino-acid sequence, 68 residues long: U-poneritoxin(01)-Om4a (68 aa).

The signal sequence occupies residues 1–25; that stretch reads MKPSSLTLAFLVVFMMAIMYNSVQA. Positions 26–39 are excised as a propeptide; that stretch reads EALADADAEAFAEA.

This sequence belongs to the formicidae venom precursor-01 superfamily. As to quaternary structure, homo- or heterodimer with PLP7 (AC A0A348G6I9); disulfide-linked. Truncated sequences of this peptide have also been found in the venom. It is possible they have been cleaved in the venom. As to expression, expressed by the venom gland.

It is found in the secreted. Functionally, this homodimer composed of two cationic amphipathic alpha-helical peptides has antimicrobial activities against E.coli (MIC=3.1 uM), S.aureus (MIC=3.1 uM), and S.cerevisiae (MIC=3.1 uM). It also shows histamine-releasing activity (66.4% at 10 uM) and a weak hemolytic activity (10.5% at 50 uM). The sequence is that of U-poneritoxin(01)-Om4a from Odontomachus monticola (Trap-jaw ant).